Here is a 130-residue protein sequence, read N- to C-terminus: EG45-like domain containing protein 2 (130 aa).

An N-terminal signal peptide occupies residues 1–25 (MIKMAVKFVVVMIVFAQILAPIAEA). The Expansin-like EG45 domain maps to 28-130 (GKAVYYDPPY…GNIRVVYTPI (103 aa)). N-linked (GlcNAc...) asparagine glycosylation is present at Asn-106.

As to expression, expressed in unstressed leaves.

It localises to the secreted. Plays a systemic role in water and solute homeostasis. In Arabidopsis thaliana (Mouse-ear cress), this protein is EG45-like domain containing protein 2 (EGC2).